Consider the following 394-residue polypeptide: Elongation factor Tu (394 aa).

Residues 10-204 (KPHVNIGTIG…AVDSYIPQPV (195 aa)) enclose the tr-type G domain. The segment at 19–26 (GHVDHGKT) is G1. A GTP-binding site is contributed by 19–26 (GHVDHGKT). Threonine 26 contacts Mg(2+). Residues 60 to 64 (GITIS) form a G2 region. Residues 81–84 (DCPG) form a G3 region. GTP is bound by residues 81–85 (DCPGH) and 136–139 (NKVD). A G4 region spans residues 136 to 139 (NKVD). The segment at 174 to 176 (SAL) is G5.

The protein belongs to the TRAFAC class translation factor GTPase superfamily. Classic translation factor GTPase family. EF-Tu/EF-1A subfamily. Monomer.

The protein localises to the cytoplasm. The catalysed reaction is GTP + H2O = GDP + phosphate + H(+). Functionally, GTP hydrolase that promotes the GTP-dependent binding of aminoacyl-tRNA to the A-site of ribosomes during protein biosynthesis. The polypeptide is Elongation factor Tu (Rickettsia rhipicephali).